Reading from the N-terminus, the 278-residue chain is Energy-coupling factor transporter ATP-binding protein EcfA1 (278 aa).

The region spanning 5–239 (LLLESVSYQY…QDKLEAAGID (235 aa)) is the ABC transporter domain. An ATP-binding site is contributed by 39–46 (GPNGSGKS).

It belongs to the ABC transporter superfamily. Energy-coupling factor EcfA family. As to quaternary structure, forms a stable energy-coupling factor (ECF) transporter complex composed of 2 membrane-embedded substrate-binding proteins (S component), 2 ATP-binding proteins (A component) and 2 transmembrane proteins (T component).

It is found in the cell membrane. Its function is as follows. ATP-binding (A) component of a common energy-coupling factor (ECF) ABC-transporter complex. Unlike classic ABC transporters this ECF transporter provides the energy necessary to transport a number of different substrates. This is Energy-coupling factor transporter ATP-binding protein EcfA1 from Halalkalibacterium halodurans (strain ATCC BAA-125 / DSM 18197 / FERM 7344 / JCM 9153 / C-125) (Bacillus halodurans).